Here is a 637-residue protein sequence, read N- to C-terminus: Protein arginine N-methyltransferase 5 (637 aa).

Residue A2 is modified to N-acetylalanine; in Protein arginine N-methyltransferase 5, N-terminally processed. Positions 13–292 (RVSSGRDLNC…YLEYLSQNRP (280 aa)) are TIM barrel. The SAM-dependent MTase PRMT-type domain maps to 308–615 (LQSPLQPLMD…SNSKKVWYEW (308 aa)). Residue Y324 coordinates S-adenosyl-L-methionine. Position 327 (F327) interacts with a protein. Residues 333 to 334 (KY), E392, and 419 to 420 (DM) each bind S-adenosyl-L-methionine. 2 residues coordinate a protein: E435 and E444. Active-site proton donor/acceptor residues include E435 and E444. Residues 465 to 637 (PGEYTSFLAP…PTGRSYTIGL (173 aa)) form a beta barrel region. Positions 488–494 (REKDRDP) are dimerization.

The protein belongs to the class I-like SAM-binding methyltransferase superfamily. Protein arginine N-methyltransferase family. As to quaternary structure, forms, at least, homodimers and homotetramers. Component of the methylosome complex, composed of PRMT5, WDR77 and CLNS1A. Found in a complex composed of PRMT5, WDR77 and RIOK1. RIOK1 and CLNS1A associate with PRMT5 in a mutually exclusive fashion, which allows the recruitment of distinct methylation substrates, such as nucleolin/NCL and Sm proteins, respectively. Interacts with PRDM1. Identified in a complex composed of methylosome and PRMT1 and ERH. Interacts with EGFR; methylates EGFR and stimulates EGFR-mediated ERK activation. Interacts with HOXA9. Interacts with SRGAP2. Found in a complex with COPRS, RUNX1 and CBFB. Interacts with CHTOP; the interaction symmetrically methylates CHTOP, but seems to require the presence of PRMT1. Interacts with EPB41L3; this modulates methylation of target proteins. Component of a high molecular weight E2F-pocket protein complex, CERC (cyclin E1 repressor complex). Associates with SWI/SNF remodeling complexes containing SMARCA2 and SMARCA4. Interacts with JAK2, SSTR1, SUPT5H, BRAF and with active RAF1. Interacts with LSM11, PRMT7 and SNRPD3. Interacts with COPRS; promoting its recruitment on histone H4. Interacts with CLNS1A/pICln. Identified in a complex with CLNS1A/pICln and Sm proteins. Interacts with RPS10. Interacts with WDR77. Interacts with IWS1. Interacts with CRY1. Interacts with POLR2A. Interacts with SMN1/SMN2. Interacts with LYAR; this interaction is direct. Interacts with TTC5/STRAP; this interaction is DNA damage-dependent and promotes PRMT5 interaction with p53/TP53. Interacts with p53/TP53 in response to DNA damage; the interaction is TTC5/STRAP dependent. Interacts with FAM47E; the interaction is direct, promotes PRMT5 localization to chromatin, and does not disrupt its association with WDR77 or STUB1. Interacts with TDRD6. Interacts with STUB1. Interacts with MBD2. Does not interact with MBD3. In terms of tissue distribution, ubiquitous.

The protein resides in the cytoplasm. It localises to the nucleus. The protein localises to the chromosome. Its subcellular location is the golgi apparatus. It carries out the reaction L-arginyl-[protein] + 2 S-adenosyl-L-methionine = N(omega),N(omega)'-dimethyl-L-arginyl-[protein] + 2 S-adenosyl-L-homocysteine + 2 H(+). With respect to regulation, activity is increased by EGF, HGF, FGF1 or FGF2 treatments, and slightly decreased by NGF treatment. Arginine methyltransferase that can both catalyze the formation of omega-N monomethylarginine (MMA) and symmetrical dimethylarginine (sDMA), with a preference for the formation of MMA. Specifically mediates the symmetrical dimethylation of arginine residues in the small nuclear ribonucleoproteins Sm D1 (SNRPD1) and Sm D3 (SNRPD3); such methylation being required for the assembly and biogenesis of snRNP core particles. Methylates SUPT5H and may regulate its transcriptional elongation properties. May methylate the N-terminal region of MBD2. Mono- and dimethylates arginine residues of myelin basic protein (MBP) in vitro. May play a role in cytokine-activated transduction pathways. Negatively regulates cyclin E1 promoter activity and cellular proliferation. Methylates histone H2A and H4 'Arg-3' during germ cell development. Methylates histone H3 'Arg-8', which may repress transcription. Methylates the Piwi proteins (PIWIL1, PIWIL2 and PIWIL4), methylation of Piwi proteins being required for the interaction with Tudor domain-containing proteins and subsequent localization to the meiotic nuage. Methylates RPS10. Attenuates EGF signaling through the MAPK1/MAPK3 pathway acting at 2 levels. First, monomethylates EGFR; this enhances EGFR 'Tyr-1197' phosphorylation and PTPN6 recruitment, eventually leading to reduced SOS1 phosphorylation. Second, methylates RAF1 and probably BRAF, hence destabilizing these 2 signaling proteins and reducing their catalytic activity. Required for induction of E-selectin and VCAM-1, on the endothelial cells surface at sites of inflammation. Methylates HOXA9. Methylates and regulates SRGAP2 which is involved in cell migration and differentiation. Acts as a transcriptional corepressor in CRY1-mediated repression of the core circadian component PER1 by regulating the H4R3 dimethylation at the PER1 promoter. Methylates GM130/GOLGA2, regulating Golgi ribbon formation. Methylates H4R3 in genes involved in glioblastomagenesis in a CHTOP- and/or TET1-dependent manner. Symmetrically methylates POLR2A, a modification that allows the recruitment to POLR2A of proteins including SMN1/SMN2 and SETX. This is required for resolving RNA-DNA hybrids created by RNA polymerase II, that form R-loop in transcription terminal regions, an important step in proper transcription termination. Along with LYAR, binds the promoter of gamma-globin HBG1/HBG2 and represses its expression. Symmetrically methylates NCL. Methylates p53/TP53; methylation might possibly affect p53/TP53 target gene specificity. Involved in spliceosome maturation and mRNA splicing in prophase I spermatocytes through the catalysis of the symmetrical arginine dimethylation of SNRPB (small nuclear ribonucleoprotein-associated protein) and the interaction with tudor domain-containing protein TDRD6. This is Protein arginine N-methyltransferase 5 (PRMT5) from Homo sapiens (Human).